The sequence spans 175 residues: Cytochrome c homolog (175 aa).

The Cytoplasmic portion of the chain corresponds to M1–K8. The chain crosses the membrane as a helical; Signal-anchor span at residues I9–I29. At L30 to K175 the chain is on the periplasmic side. Heme c-binding residues include C84, C87, H88, and M150.

The protein belongs to the cytochrome c family. In terms of processing, binds 1 heme c group covalently per subunit.

Its subcellular location is the cell membrane. In terms of biological role, may be involved in electron transfer from bc1 complex to aa3. In Rickettsia typhi (strain ATCC VR-144 / Wilmington), this protein is Cytochrome c homolog (cycM).